Here is an 89-residue protein sequence, read N- to C-terminus: UPF0223 protein BPUM_1362 (89 aa).

It belongs to the UPF0223 family.

This is UPF0223 protein BPUM_1362 from Bacillus pumilus (strain SAFR-032).